The primary structure comprises 207 residues: LexA repressor (207 aa).

The H-T-H motif DNA-binding region spans Val-28–Ala-48. Residues Ser-129 and Lys-167 each act as for autocatalytic cleavage activity in the active site.

The protein belongs to the peptidase S24 family. Homodimer.

The catalysed reaction is Hydrolysis of Ala-|-Gly bond in repressor LexA.. In terms of biological role, represses a number of genes involved in the response to DNA damage (SOS response), including recA and lexA. In the presence of single-stranded DNA, RecA interacts with LexA causing an autocatalytic cleavage which disrupts the DNA-binding part of LexA, leading to derepression of the SOS regulon and eventually DNA repair. The sequence is that of LexA repressor from Geobacillus thermodenitrificans (strain NG80-2).